The following is a 308-amino-acid chain: Zinc finger protein unc-98 (308 aa).

2 consecutive C2H2-type zinc fingers follow at residues 111–133 (YKCR…ERIH) and 139–161 (YVCG…AAQH). A C2H2-type 3; degenerate zinc finger spans residues 166 to 186 (GFKCDCGRTFFSYTEMLYHKH). The C2H2-type 4 zinc-finger motif lies at 244–266 (YICEYCSKSYSDSRGLAYHMYSH).

Its subcellular location is the nucleus. The protein localises to the cytoplasm. Functionally, probable transcription factor. Required for muscle structure. Its dual subcellular localization suggests that it may function both as a muscle adhesion complex protein and as a transcription factor, or work together with transcription factors, to influence gene expression. Thought to act as a molecular bridge between unc-97 and mhc-a at the M-line of muscles, possibly in a signaling role. The chain is Zinc finger protein unc-98 from Caenorhabditis briggsae.